The sequence spans 369 residues: Gap junction alpha-5 protein (369 aa).

Topologically, residues 2-19 are cytoplasmic; that stretch reads GDWSFLGEFLEEVHKHST. The chain crosses the membrane as a helical span at residues 20 to 40; that stretch reads VVGKVWLTVLFIFRMLVLGTA. The Extracellular segment spans residues 41–76; sequence AGPLWGDEQSDFMCDTQQPGCENVCYDKAFPISHVR. A helical transmembrane segment spans residues 77-97; it reads FWVLQIIFVSTPSLVYMGHAM. At 98 to 169 the chain is on the cytoplasmic side; it reads HTVRMEEKRK…YSILIRTAME (72 aa). Residues 170-190 form a helical membrane-spanning segment; it reads IAFIVGQYILYGIFLETLYIC. The Extracellular segment spans residues 191 to 210; the sequence is QRAPCPHPVNCYVSRPTEKN. A helical transmembrane segment spans residues 211-231; the sequence is VFIIFMLAVAVLSLFLSLAEL. Residues 232-369 are Cytoplasmic-facing; sequence YHLGWKKAKE…SKARSDDLSV (138 aa). Positions 347–369 are disordered; it reads NEKRRFSKASRASSKARSDDLSV.

This sequence belongs to the connexin family. Alpha-type (group II) subfamily. As to quaternary structure, a connexon is composed of a hexamer of connexins. As to expression, mostly in heart, and in the whole embryo, liver, stomach, and pectoral muscle.

The protein localises to the cell membrane. Its subcellular location is the cell junction. The protein resides in the gap junction. Its function is as follows. One gap junction consists of a cluster of closely packed pairs of transmembrane channels, the connexons, through which materials of low MW diffuse from one cell to a neighboring cell. This is Gap junction alpha-5 protein (GJA5) from Gallus gallus (Chicken).